The following is a 237-amino-acid chain: RING finger protein vilya (237 aa).

An RING-type zinc finger spans residues Cys-21–Arg-69. The disordered stretch occupies residues Met-172–Leu-237. The segment covering Arg-180–Ser-195 has biased composition (low complexity). Positions Arg-221–Leu-237 are enriched in polar residues.

As to quaternary structure, may interact with itself and with narya and nenya through their RING-type zinc fingers. As to expression, expressed in nurse cell and pro-oocytes (at protein level).

The protein localises to the chromosome. Its function is as follows. Required for the formation of DNA double-strand breaks during meiosis together with narya and nenya. This Drosophila melanogaster (Fruit fly) protein is RING finger protein vilya.